The following is a 1483-amino-acid chain: Heme-responsive zinc finger transcription factor HAP1 (1483 aa).

A compositionally biased stretch (polar residues) spans 1 to 50; sequence MSNTPYNSSVPSIASMTQSSVSRSPNMHTATTPGANTSSNSPPLHMSSDS. The segment at 1–56 is disordered; it reads MSNTPYNSSVPSIASMTQSSVSRSPNMHTATTPGANTSSNSPPLHMSSDSSKIKRK. Residues Cys-64, Cys-67, Cys-74, Cys-81, Cys-84, and Cys-93 each contribute to the Zn(2+) site. A DNA-binding region (zn(2)-C6 fungal-type) is located at residues 64–93; it reads CTICRKRKVKCDKLRPHCQQCTKTGVAHLC. Positions 105–134 form a coiled coil; that stretch reads EKELLKDNELKKLRERVKSLEKTLSKVHSS. Residues 126–208 are disordered; it reads KTLSKVHSSP…ANSSSLSISN (83 aa). The span at 130–142 shows a compositional bias: low complexity; sequence KVHSSPSSNSLKS. Polar residues-rich tracts occupy residues 143-152 and 160-176; these read YNTPESSNLF and TLVN…SHMH. Over residues 177-208 the composition is skewed to low complexity; it reads QQQQQQQQQEQQQDFSRSANANANSSSLSISN. The tract at residues 244–444 is heme-responsive; required for HMC formation; sequence KGDPYLKLLW…NTIPHHQPQS (201 aa). 6 HRM repeats span residues 280 to 285, 299 to 304, 323 to 328, 347 to 352, 389 to 394, and 415 to 420; these read KCPINH, KCPVDH, RCPVDH, and RCPIDH. 2 stretches are compositionally biased toward polar residues: residues 432-447 and 706-734; these read STHN…SGSH and QLNA…NPTL. Disordered regions lie at residues 432 to 458 and 706 to 767; these read STHN…SRKH and QLNA…KENQ. Low complexity predominate over residues 735–759; the sequence is NNNMSAATTNSSSRSGSADSRSGSN. Residues 1192–1197 form an HRM 7 repeat; it reads KCPVYQ. A disordered region spans residues 1384 to 1411; that stretch reads TANTDTSANGSALSTLTSPQGSDLASNS. Over residues 1388-1411 the composition is skewed to polar residues; it reads DTSANGSALSTLTSPQGSDLASNS.

In terms of assembly, binds DNA as a homodimer. Interacts with SRO9 and YDJ1. In the absence of heme, binds to at least four cellular proteins, including YDJ1 and SRO9, forming a high-molecular-weight complex (HMC) which results in repression of its activity and dictates its DNA-binding specificity.

The protein localises to the nucleus. Its function is as follows. Regulation of oxygen dependent gene expression. It modulates the expression of Iso-1 (CYP1) and Iso-2 (CYP3) cytochrome c. In response to heme, promotes transcription of genes encoding functions required for respiration, controlling oxidative damage and repression of anaerobic genes. Binds to the sequence 5'-CGGNNNTNNCGG-3'. Is non-functional in terms of iso-1 cytochrome c expression in strain S288c and its derivatives. The sequence is that of Heme-responsive zinc finger transcription factor HAP1 (HAP1) from Saccharomyces cerevisiae (Baker's yeast).